The following is a 286-amino-acid chain: Bifunctional protein FolD (286 aa).

NADP(+) contacts are provided by residues 165–167 (GRS), S190, and V231.

It belongs to the tetrahydrofolate dehydrogenase/cyclohydrolase family. Homodimer.

The catalysed reaction is (6R)-5,10-methylene-5,6,7,8-tetrahydrofolate + NADP(+) = (6R)-5,10-methenyltetrahydrofolate + NADPH. It carries out the reaction (6R)-5,10-methenyltetrahydrofolate + H2O = (6R)-10-formyltetrahydrofolate + H(+). Its pathway is one-carbon metabolism; tetrahydrofolate interconversion. Catalyzes the oxidation of 5,10-methylenetetrahydrofolate to 5,10-methenyltetrahydrofolate and then the hydrolysis of 5,10-methenyltetrahydrofolate to 10-formyltetrahydrofolate. In Bacillus cereus (strain ATCC 14579 / DSM 31 / CCUG 7414 / JCM 2152 / NBRC 15305 / NCIMB 9373 / NCTC 2599 / NRRL B-3711), this protein is Bifunctional protein FolD.